The following is a 546-amino-acid chain: Putative serine hydroxymethyltransferase, mitochondrial (546 aa).

The N-terminal 64 residues, 1–64 (MSSFQSTAAV…RFSSSSIAND (64 aa)), are a transit peptide targeting the mitochondrion. Position 305 is an N6-(pyridoxal phosphate)lysine (K305).

The protein belongs to the SHMT family. As to quaternary structure, homotetramer. Pyridoxal 5'-phosphate serves as cofactor.

Its subcellular location is the mitochondrion. It catalyses the reaction (6R)-5,10-methylene-5,6,7,8-tetrahydrofolate + glycine + H2O = (6S)-5,6,7,8-tetrahydrofolate + L-serine. It functions in the pathway one-carbon metabolism; tetrahydrofolate interconversion. Interconversion of serine and glycine. This Neurospora crassa (strain ATCC 24698 / 74-OR23-1A / CBS 708.71 / DSM 1257 / FGSC 987) protein is Putative serine hydroxymethyltransferase, mitochondrial (cbs-2).